The following is a 352-amino-acid chain: Phosphatase Herzog (352 aa).

Residues Met1–Leu102 are prion-like domain necessary for both protein assembly and membrane targeting. The segment at Pro103 to Ser267 is mediates substrate recognition. The FCP1 homology domain occupies Thr108–Leu266. Disordered regions lie at residues Asn284 to Gln310 and Thr332 to Thr352.

In terms of assembly, monomer. Forms higher-order protein aggregates with amyloid-like features during gastrulation. Interacts with babo, dah, Irk1, pch2, Ras64B, sax and Src64B.

It localises to the cell membrane. It catalyses the reaction O-phospho-L-seryl-[protein] + H2O = L-seryl-[protein] + phosphate. With respect to regulation, phosphatase activity requires amyloid-like aggregation on the membrane. Its function is as follows. Prion-like membrane-associated phosphatase. Phosphatase activity depends on amyloid-like assembly at the membrane. Might have a role in establishment of segment polarity in embryos. This chain is Phosphatase Herzog, found in Drosophila melanogaster (Fruit fly).